The following is a 334-amino-acid chain: Sulfhydrogenase 2 subunit beta (334 aa).

2 consecutive 4Fe-4S ferredoxin-type domains span residues 220–250 (KVWKKYAEKCLGCGNCTIVCPTCRCYEVCDT) and 294–328 (CKNYFDPEAGFNCVGCGRCDEFCPARIEHVKVLDE). Residues C229, C232, C235, C239, C306, C309, C312, and C316 each coordinate [4Fe-4S] cluster.

Dimer of heterotetramer of alpha, beta, gamma and delta subunits. The nickel-containing alpha and delta subunits constitute the hydrogenase activity. The beta and gamma subunits (flavin-containing dimer) constitute the sulfur reductase activity. The cofactor is [4Fe-4S] cluster.

It is found in the cytoplasm. The enzyme catalyses n sulfur + H2 = (n-1) sulfur + hydrogen sulfide + H(+). In terms of biological role, part of a bifunctional enzyme complex that functions as a hydrogen-evolving hydrogenase with sulfur-reducing activity. May play a role in hydrogen cycling during fermentative growth. Activity exhibited with NAD in addition to NADPH. The beta and gamma subunits form the sulfur-reducing component that catalyzes the cytoplasmic production of hydrogen sulfide in the presence of elemental sulfur. This Pyrococcus furiosus (strain ATCC 43587 / DSM 3638 / JCM 8422 / Vc1) protein is Sulfhydrogenase 2 subunit beta.